A 104-amino-acid chain; its full sequence is Antitoxin HigA-2 (104 aa).

An HTH cro/C1-type domain is found at 45 to 98 (IVSIREQFNMSRGVFARLLHTSSRTLENWEQGRSVPNGQAVTLLKLVQRHPETL). The segment at residues 56–75 (RGVFARLLHTSSRTLENWEQ) is a DNA-binding region (H-T-H motif).

Its function is as follows. Antitoxin component of a type II toxin-antitoxin (TA) system that counteracts the effect of the HigB-2 toxin. Binds to its own promoter and regulates transcription of the higB-2/higA-2 operon. In Vibrio cholerae serotype O1 (strain ATCC 39315 / El Tor Inaba N16961), this protein is Antitoxin HigA-2 (higA-2).